Here is a 352-residue protein sequence, read N- to C-terminus: Sulfate-binding protein (352 aa).

The first 40 residues, 1–40 (MARSAFGWGFSVIAVLMVGSITACNTTTTTEPGQGENASQ), serve as a signal peptide directing secretion.

The protein belongs to the prokaryotic sulfate-binding protein family.

The protein localises to the periplasm. This protein specifically binds sulfate and is involved in its transmembrane transport. The sequence is that of Sulfate-binding protein (sbpA) from Synechocystis sp. (strain ATCC 27184 / PCC 6803 / Kazusa).